A 490-amino-acid chain; its full sequence is Doublesex- and mab-3-related transcription factor A1 (490 aa).

The segment covering Met-1–Gly-13 has biased composition (basic and acidic residues). Residues Met-1 to Ala-31 form a disordered region. Positions Ala-20 to Ala-31 are enriched in low complexity. Residues Cys-86–Arg-133 constitute a DNA-binding region (DM). Disordered regions lie at residues Gly-152–Gln-171 and Asp-207–Ser-289. The segment covering Asp-207 to Asn-216 has biased composition (basic and acidic residues). 2 stretches are compositionally biased toward polar residues: residues Cys-217–Asn-242 and Pro-269–Ser-289. A DMA domain is found at Arg-314–Gln-349.

It belongs to the DMRT family. As to expression, widely expressed, with highest levels in ovary, testis, epididymis, preputial gland, vomeronasal organ, liver, salivary glands and heart. Also expressed throughout the brain with highest levels in the olfactory bulbs and medulla. Detected at similar levels in gonads of both sexes.

The protein localises to the nucleus. In Mus musculus (Mouse), this protein is Doublesex- and mab-3-related transcription factor A1 (Dmrta1).